We begin with the raw amino-acid sequence, 89 residues long: uncharacterized protein (89 aa).

This sequence to Synechocystis PCC 6803 slr1025.

This is an uncharacterized protein from Ureaplasma parvum serovar 3 (strain ATCC 700970).